The sequence spans 343 residues: RNA-binding protein 43 (343 aa).

An RRM domain is found at 15-90; it reads RTVVVSGLPV…PLLTVSHFSE (76 aa). Positions 170–200 are disordered; it reads RRNWTGQNPRRVLQKNENSAPTLGTSVPEPA. Over residues 184–194 the composition is skewed to polar residues; that stretch reads KNENSAPTLGT.

The chain is RNA-binding protein 43 (Rbm43) from Rattus norvegicus (Rat).